The chain runs to 277 residues: 2-dehydro-3-deoxyphosphooctonate aldolase (277 aa).

It belongs to the KdsA family.

It is found in the cytoplasm. The enzyme catalyses D-arabinose 5-phosphate + phosphoenolpyruvate + H2O = 3-deoxy-alpha-D-manno-2-octulosonate-8-phosphate + phosphate. The protein operates within carbohydrate biosynthesis; 3-deoxy-D-manno-octulosonate biosynthesis; 3-deoxy-D-manno-octulosonate from D-ribulose 5-phosphate: step 2/3. It functions in the pathway bacterial outer membrane biogenesis; lipopolysaccharide biosynthesis. The polypeptide is 2-dehydro-3-deoxyphosphooctonate aldolase (Brucella canis (strain ATCC 23365 / NCTC 10854 / RM-666)).